Consider the following 267-residue polypeptide: Ribosomal RNA large subunit methyltransferase E (267 aa).

S-adenosyl-L-methionine contacts are provided by glycine 52, phenylalanine 54, aspartate 72, aspartate 90, and aspartate 114. Lysine 154 (proton acceptor) is an active-site residue. Low complexity predominate over residues 212–252; that stretch reads EAPRAPAPPEQAAAPEEATAPATRAARQKPAPAKKPAAAKR. A disordered region spans residues 212-267; sequence EAPRAPAPPEQAAAPEEATAPATRAARQKPAPAKKPAAAKRPAARKRAAKKPARRA. The span at 253–267 shows a compositional bias: basic residues; it reads PAARKRAAKKPARRA.

Belongs to the class I-like SAM-binding methyltransferase superfamily. RNA methyltransferase RlmE family.

It is found in the cytoplasm. It catalyses the reaction uridine(2552) in 23S rRNA + S-adenosyl-L-methionine = 2'-O-methyluridine(2552) in 23S rRNA + S-adenosyl-L-homocysteine + H(+). In terms of biological role, specifically methylates the uridine in position 2552 of 23S rRNA at the 2'-O position of the ribose in the fully assembled 50S ribosomal subunit. The protein is Ribosomal RNA large subunit methyltransferase E of Anaeromyxobacter dehalogenans (strain 2CP-C).